A 379-amino-acid chain; its full sequence is Cytochrome bd-I ubiquinol oxidase subunit 2 (379 aa).

Met1 is modified (N-formylmethionine). At 1–8 the chain is on the cytoplasmic side; that stretch reads MIDYEVLR. Residues 9-28 form a helical membrane-spanning segment; sequence FIWWLLVGVLLIGFAVTDGF. At 29-79 the chain is on the periplasmic side; it reads DMGVGMLTRFLGRNDTERRIMINSIAPHWDGNQVWLITAGGALFAAWPMVY. The helical transmembrane segment at 80–99 threads the bilayer; sequence AAAFSGFYVAMILVLASLFF. Topologically, residues 100–122 are cytoplasmic; the sequence is RPVGFDYRSKIEETRWRNMWDWG. Residues 123–142 form a helical membrane-spanning segment; it reads IFIGSFVPPLVIGVAFGNLL. Over 143–164 the chain is Periplasmic; the sequence is QGVPFNVDEYLRLYYTGNFFQL. The helical transmembrane segment at 165-184 threads the bilayer; the sequence is LNPFGLLAGVVSVGMIITQG. Topologically, residues 185 to 205 are cytoplasmic; the sequence is ATYLQMRTVGELHLRTRATAQ. Residues 206–225 form a helical membrane-spanning segment; sequence VAALVTLVCFALAGVWVMYG. Topologically, residues 226-262 are periplasmic; sequence IDGYVVKSTMDHYAASNPLNKEVVREAGAWLVNFNNT. The chain crosses the membrane as a helical span at residues 263–282; sequence PILWAIPALGVVLPLLTILT. Over 283–292 the chain is Cytoplasmic; that stretch reads ARMDKAAWAF. A helical membrane pass occupies residues 293 to 312; it reads VFSSLTLACIILTAGIAMFP. Residues 313-336 are Periplasmic-facing; it reads FVMPSSTMMNASLTMWDATSSQLT. The helical transmembrane segment at 337–356 threads the bilayer; sequence LNVMTWVAVVLVPIILLYTA. Residues 357-379 lie on the Cytoplasmic side of the membrane; sequence WCYWKMFGRITKEDIERNTHSLY.

The protein belongs to the cytochrome ubiquinol oxidase subunit 2 family. In terms of assembly, heterodimer of subunits I and II. Heme b serves as cofactor. It depends on heme d cis-diol as a cofactor.

The protein localises to the cell inner membrane. The enzyme catalyses 2 a ubiquinol + O2(in) + 4 H(+)(in) = 2 a ubiquinone + 2 H2O(in) + 4 H(+)(out). It functions in the pathway energy metabolism; oxidative phosphorylation. Its function is as follows. A terminal oxidase that produces a proton motive force by the vectorial transfer of protons across the inner membrane. It is the component of the aerobic respiratory chain of E.coli that predominates when cells are grown at low aeration. Generates a proton motive force using protons and electrons from opposite sides of the membrane to generate H(2)O, transferring 1 proton/electron. The chain is Cytochrome bd-I ubiquinol oxidase subunit 2 (cydB) from Escherichia coli O157:H7.